The following is a 130-amino-acid chain: Protein ApaG (130 aa).

In terms of domain architecture, ApaG spans 3–127 (RAVTRGIEVS…FSLDIPEQRR (125 aa)).

The chain is Protein ApaG from Brucella anthropi (strain ATCC 49188 / DSM 6882 / CCUG 24695 / JCM 21032 / LMG 3331 / NBRC 15819 / NCTC 12168 / Alc 37) (Ochrobactrum anthropi).